Here is a 508-residue protein sequence, read N- to C-terminus: MAMTILHASEKVNAEAEATTCPPTEKVKEEQQQQEQLQHSKTSKRVQFYRFALFFIAGSFAAFSFHALTSSSSWRLRQLHHLPNAHYLQTREEFAVYSVEELNAFKEFYDKSISDSVGASYSEAEQTNIKEALGALRLAQDMHLSGKDDKASRLFEHALALAPKHPEVLLRYGEFLEHNQRNIVLADQYYFQALTLCPSNSEALANRQRTAEVVQTLDERRLQSLDSKRDALSAIHESSSALRRAKKEAYFQHIYHSVGIEGNTMTLAQTRSILETRMAVDGKSIDEHNEILGMDLAMKYINASLVQKLEITIKDILELHRRVLGHVDPIEGGEFRRNQVYVGGHVPPGPGDLALLMQRFERWLNSEHSSSLHPVNYAAYAHYKLVHIHPFIDGNGRTSRLLMNTLLMRAGYPPVIIPKQQRSKYYHFLKLANEGDIRPFVRFIADCTEKTLDLYLWATSDLPQQIPMLIQTESEAGEQLAQMRSPHISAQSASIPEFYEFSGSGFQP.

The chain crosses the membrane as a helical span at residues 48 to 70 (FYRFALFFIAGSFAAFSFHALTS). TPR repeat units lie at residues 132–165 (ALGA…APKH) and 166–200 (PEVL…CPSN). The Inhibitory (S/T)XXXE(G/N) motif signature appears at 257-262 (SVGIEG). Residues E261 and 342-345 (VGGH) contribute to the ATP site. The Fido domain maps to 311 to 446 (ITIKDILELH…IRPFVRFIAD (136 aa)). Residue H389 is part of the active site. ATP is bound by residues 393–400 (DGNGRTSR), 425–426 (YY), and N433.

This sequence belongs to the fic family. Homodimer.

The protein localises to the membrane. The catalysed reaction is L-tyrosyl-[protein] + ATP = O-(5'-adenylyl)-L-tyrosyl-[protein] + diphosphate. The enzyme catalyses L-threonyl-[protein] + ATP = 3-O-(5'-adenylyl)-L-threonyl-[protein] + diphosphate. It carries out the reaction 3-O-(5'-adenylyl)-L-threonyl-[protein] + H2O = L-threonyl-[protein] + AMP + H(+). With respect to regulation, the side chain of Glu-261 determines which of the two opposing activities (AMPylase or de-AMPylase) will take place. In response to endoplasmic reticulum stress, mediates de-AMPylase activity. Adenylyltransferase activity is inhibited by the inhibitory helix present at the N-terminus: Glu-261 binds ATP and competes with ATP-binding at Arg-400, thereby preventing adenylyltransferase activity. In unstressed cells, disengagement of Glu-261 promotes adenylyltransferase activity. Activation dissociates ATP-binding from Glu-261, allowing ordered binding of the entire ATP moiety with the alpha-phosphate in an orientation that is productive for accepting an incoming target hydroxyl side chain. Protein that can both mediate the addition of adenosine 5'-monophosphate (AMP) to specific residues of target proteins (AMPylation), and the removal of the same modification from target proteins (de-AMPylation), depending on the context. The side chain of Glu-261 determines which of the two opposing activities (AMPylase or de-AMPylase) will take place. Acts as a key regulator of the unfolded protein response (UPR) by mediating AMPylation or de-AMPylation of Hsc70-3/BiP. In unstressed cells, acts as an adenylyltransferase by mediating AMPylation of Hsc70-3/BiP at 'Thr-518', thereby inactivating it. In response to endoplasmic reticulum stress, acts as a phosphodiesterase by mediating removal of ATP (de-AMPylation) from Hsc70-3/BiP at 'Thr-518', leading to restore HSPA5/BiP activity. The polypeptide is Protein adenylyltransferase Fic (Drosophila persimilis (Fruit fly)).